The chain runs to 241 residues: Triosephosphate isomerase (241 aa).

9–11 (NWK) lines the substrate pocket. Residue His-96 is the Electrophile of the active site. The Proton acceptor role is filled by Glu-165. Substrate-binding positions include Gly-171, Ser-204, and 225-226 (GG).

It belongs to the triosephosphate isomerase family. In terms of assembly, homodimer.

It is found in the cytoplasm. It carries out the reaction D-glyceraldehyde 3-phosphate = dihydroxyacetone phosphate. It functions in the pathway carbohydrate biosynthesis; gluconeogenesis. The protein operates within carbohydrate degradation; glycolysis; D-glyceraldehyde 3-phosphate from glycerone phosphate: step 1/1. Its function is as follows. Involved in the gluconeogenesis. Catalyzes stereospecifically the conversion of dihydroxyacetone phosphate (DHAP) to D-glyceraldehyde-3-phosphate (G3P). This is Triosephosphate isomerase from Prochlorococcus marinus (strain MIT 9515).